The sequence spans 162 residues: UPF0114 protein Psyr_4257 (162 aa).

The next 4 helical transmembrane spans lie at 15–35 (LLAPIYFGLSLGLLALCLKFF), 53–73 (LILVLLSLIDMALVGGLLVMV), 109–129 (VAASIVAISSIHLLRVFMDAT), and 136–156 (LMWYVIIHMTFVISAFAMGYL).

The protein belongs to the UPF0114 family.

It is found in the cell membrane. This is UPF0114 protein Psyr_4257 from Pseudomonas syringae pv. syringae (strain B728a).